We begin with the raw amino-acid sequence, 66 residues long: DNA-binding protein 7d (66 aa).

N6-methyllysine; partial occurs at positions 5 and 7.

The protein belongs to the 7 kDa DNA-binding/endoribonuclease P2 family. As to quaternary structure, monomer. Lys-5 was 70% monomethylated in form 7a, 25% in form 7b, and 20% in form 7d. Lys-7 was 50% monomethylated in form 7a, 40% in form 7b, and 50% in form 7d.

The protein localises to the cytoplasm. In terms of biological role, can constrain negative DNA supercoils. May be involved in maintaining the integrity of the genome at high temperature. This chain is DNA-binding protein 7d, found in Sulfolobus acidocaldarius (strain ATCC 33909 / DSM 639 / JCM 8929 / NBRC 15157 / NCIMB 11770).